The sequence spans 832 residues: MAFSRIALLCQRFSRQQQQRQLLHRPLTTKLDNTRFLHPNQSKLAQNLIVIFTRQPFSPDDPELLILSPELNTKVVETVLNGFKRWGLAYLFFNWASKQEGYRNDMYAYNAMASILSRARQNASLKALVVDVLNSRCFMSPGAFGFFIRCLGNAGLVDEASSVFDRVREMGLCVPNAYTYNCLLEAISKSNSSSVELVEARLKEMRDCGFHFDKFTLTPVLQVYCNTGKSERALSVFNEILSRGWLDEHISTILVVSFCKWGQVDKAFELIEMLEERDIRLNYKTYCVLIHGFVKESRIDKAFQLFEKMRRMGMNADIALYDVLIGGLCKHKDLEMALSLYLEIKRSGIPPDRGILGKLLCSFSEESELSRITEVIIGDIDKKSVMLLYKSLFEGFIRNDLVHEAYSFIQNLMGNYESDGVSEIVKLLKDHNKAILPDSDSLSIVINCLVKANKVDMAVTLLHDIVQNGLIPGPMMYNNIIEGMCKEGRSEESLKLLGEMKDAGVEPSQFTLNCIYGCLAERCDFVGALDLLKKMRFYGFEPWIKHTTFLVKKLCENGRAVDACKYLDDVAGEGFLGHMVASTAAIDGLIKNEGVDRGLELFRDICANGHCPDVIAYHVLIKALCKACRTMEADILFNEMVSKGLKPTVATYNSMIDGWCKEGEIDRGLSCIVRMYEDEKNPDVITYTSLIHGLCASGRPSEAIFRWNEMKGKDCYPNRITFMALIQGLCKCGWSGEALVYFREMEEKEMEPDSAVYLSLVSSFLSSENINAGFGIFREMVHKGRFPVSVDRNYMLAVNVTSKFVEDLRTSCYLTCLIKDGRIPILAVVSRI.

The N-terminal 27 residues, 1-27 (MAFSRIALLCQRFSRQQQQRQLLHRPL), are a transit peptide targeting the mitochondrion. PPR repeat units follow at residues 105-139 (DMYAYNAMASILSRARQNASLKALVVDVLNSRCFM), 140-174 (SPGAFGFFIRCLGNAGLVDEASSVFDRVREMGLCV), 176-212 (NAYTYNCLLEAISKSNSSSVELVEARLKEMRDCGFHF), 213-247 (DKFTLTPVLQVYCNTGKSERALSVFNEILSRGWLD), 252-281 (TILVVSFCKWGQVDKAFELIEMLEERDIRL), 282-316 (NYKTYCVLIHGFVKESRIDKAFQLFEKMRRMGMNA), 317-351 (DIALYDVLIGGLCKHKDLEMALSLYLEIKRSGIPP), 352-383 (DRGILGKLLCSFSEESELSRITEVIIGDIDKK), 385-415 (VMLLYKSLFEGFIRNDLVHEAYSFIQNLMGN), 438-472 (DSDSLSIVINCLVKANKVDMAVTLLHDIVQNGLIP), 473-507 (GPMMYNNIIEGMCKEGRSEESLKLLGEMKDAGVEP), 508-542 (SQFTLNCIYGCLAERCDFVGALDLLKKMRFYGFEP), 543-577 (WIKHTTFLVKKLCENGRAVDACKYLDDVAGEGFLG), 578-612 (HMVASTAAIDGLIKNEGVDRGLELFRDICANGHCP), 613-647 (DVIAYHVLIKALCKACRTMEADILFNEMVSKGLKP), 648-682 (TVATYNSMIDGWCKEGEIDRGLSCIVRMYEDEKNP), 683-717 (DVITYTSLIHGLCASGRPSEAIFRWNEMKGKDCYP), 718-752 (NRITFMALIQGLCKCGWSGEALVYFREMEEKEMEP), and 753-787 (DSAVYLSLVSSFLSSENINAGFGIFREMVHKGRFP).

It belongs to the PPR family. P subfamily.

The protein localises to the mitochondrion. The chain is Putative pentatricopeptide repeat-containing protein At5g08310, mitochondrial from Arabidopsis thaliana (Mouse-ear cress).